The primary structure comprises 421 residues: Phosphatidylinositol 5-phosphate 4-kinase type-2 gamma (421 aa).

N-acetylalanine is present on Ala-2. Ser-26 bears the Phosphoserine mark. Positions 43–420 (AADPLVGVFL…RFLDFIANIF (378 aa)) constitute a PIPK domain. The segment at 69–75 (VMLLPDD) is required for interaction with PIP5K1A. At Ser-349 the chain carries Phosphoserine.

As to quaternary structure, interacts with PIP5K1A; the interaction inhibits PIP5K1A kinase activity. Phosphorylated, phosphorylation is induced by EGF.

The protein resides in the endoplasmic reticulum. The protein localises to the cytoplasm. The catalysed reaction is a 1,2-diacyl-sn-glycero-3-phospho-(1D-myo-inositol-5-phosphate) + ATP = a 1,2-diacyl-sn-glycero-3-phospho-(1D-myo-inositol-4,5-bisphosphate) + ADP + H(+). It carries out the reaction 1,2-dihexadecanoyl-sn-glycero-3-phospho-(1D-myo-inositol-5-phosphate) + ATP = 1,2-dihexadecanoyl-sn-glycero-3-phospho-(1D-myo-inositol-4,5-bisphosphate) + ADP + H(+). The enzyme catalyses 1,2-dihexadecanoyl-sn-glycero-3-phospho-(1D-myo-inositol-5-phosphate) + GTP = 1,2-dihexadecanoyl-sn-glycero-3-phospho-(1D-myo-inositol-4,5-bisphosphate) + GDP + H(+). Functionally, phosphatidylinositol 5-phosphate 4-kinase with low enzymatic activity. May be a GTP sensor, has higher GTP-dependent kinase activity than ATP-dependent kinase activity. PIP4Ks negatively regulate insulin signaling through a catalytic-independent mechanism. They interact with PIP5Ks and suppress PIP5K-mediated PtdIns(4,5)P2 synthesis and insulin-dependent conversion to PtdIns(3,4,5)P3. The polypeptide is Phosphatidylinositol 5-phosphate 4-kinase type-2 gamma (Mus musculus (Mouse)).